The following is a 396-amino-acid chain: G-protein coupled receptor 84 (396 aa).

Topologically, residues 1-26 (MWNSSDANFSCYHESVLGYRYVAVSW) are extracellular. Residues Asn-3 and Asn-8 are each glycosylated (N-linked (GlcNAc...) asparagine). The helical transmembrane segment at 27–47 (GVVVAVTGTVGNVLTLLALAI) threads the bilayer. Topologically, residues 48–57 (QPKLRTRFNL) are cytoplasmic. The helical transmembrane segment at 58-78 (LIANLTLADLLYCTLLQPFSV) threads the bilayer. Residues 79-94 (DTYLHLHWRTGATFCR) lie on the Extracellular side of the membrane. A helical transmembrane segment spans residues 95-115 (VFGLLLFASNSVSILTLCLIA). Over 116–144 (LGRYLLIAHPKLFPQVFSAKGIVLALVST) the chain is Cytoplasmic. Residues 145–165 (WVVGVASFAPLWPIYILVPVV) form a helical membrane-spanning segment. At 166 to 180 (CTCSFDRIRGRPYTT) the chain is on the extracellular side. Residues 181 to 201 (ILMGIYFVLGLSSVGIFYCLI) form a helical membrane-spanning segment. The Cytoplasmic portion of the chain corresponds to 202–320 (HRQVKRAAQA…SSEFGKVTRM (119 aa)). Phosphoserine is present on residues Ser-221 and Ser-224. The interval 244–311 (RLASGGPSEG…KGARRAPDSS (68 aa)) is disordered. Residues 247–260 (SGGPSEGISSEPVS) are compositionally biased toward low complexity. Phosphothreonine occurs at positions 263 and 264. The helical transmembrane segment at 321-341 (CFAVFLCFALSYIPFLLLNIL) threads the bilayer. The Extracellular segment spans residues 342–352 (DARVQAPRVVH). Residues 353-373 (MLAANLTWLNGCINPVLYAAM) form a helical membrane-spanning segment. Topologically, residues 374 to 396 (NRQFRQAYGSILKRGPRSFHRLH) are cytoplasmic.

Belongs to the G-protein coupled receptor 1 family. As to quaternary structure, interacts with ARRB2 and ARR3. Post-translationally, phosphorylated by a subset of GPR84-activating ligands. Constitutively phosphorylated at Ser-221 and Ser-224 in the absence of 2-HTP. By contrast, Thr-263 and Thr-264 are phosphorylated only following prior cell treatment with 2-HTP. As to expression, expressed predominantly in hematopoietic tissues. High levels detected in the bone marrow and lower levels in the peripheral leukocytes and lung. Also expressed in brain, heart, muscle, colon, thymus, spleen, kidney, liver, placenta and intestine. Within the leukocyte population expression is higher in neutrophils and eosinophils relative to T- or B-lymphocytes.

The protein resides in the cell membrane. Its function is as follows. G protein-coupled receptor that responds endogenously to dietary fatty acids or nutrient, specifically medium-chain free fatty acid (FFA) with carbon chain lengths of C9 to C14. Capric acid (C10:0), undecanoic acid (C11:0) and lauric acid (C12:0) are the most potent agonists. In immune cells, functions as a pro-inflammatory receptor via 6-OAU and promotes the expression of pro-inflammatory mediators such as TNFalpha, IL-6 and IL-12B as well as stimulating chemotactic responses through activation of signaling mediators AKT, ERK and NF-kappa-B. In addition, triggers increased bacterial adhesion and phagocytosis in macrophages and regulates pro-inflammatory function via enhancing NLRP3 inflammasome activation. Also plays an important role in inflammation by modulating neutrophil functions. Mechanistically, promotes neutrophil chemotaxis, reactive oxygen species (ROS) production and degranulation via LYN-AKT/ERK pathway. To regulate ROS, communicates with the two formyl peptide receptors FPR2 and FPR1 to control the NADPH oxidase activity in neutrophils. The polypeptide is G-protein coupled receptor 84 (GPR84) (Homo sapiens (Human)).